Consider the following 332-residue polypeptide: Glycerol-3-phosphate dehydrogenase [NAD(P)+] (332 aa).

The NADPH site is built by Trp13, Lys34, and Lys108. Residues Lys108, Gly136, and Ser138 each coordinate sn-glycerol 3-phosphate. Ala140 is a binding site for NADPH. Residues Lys191, Asp244, Ser254, Arg255, and Asn256 each coordinate sn-glycerol 3-phosphate. Lys191 functions as the Proton acceptor in the catalytic mechanism. Arg255 lines the NADPH pocket. NADPH is bound by residues Val279 and Glu281.

It belongs to the NAD-dependent glycerol-3-phosphate dehydrogenase family.

The protein localises to the cytoplasm. The enzyme catalyses sn-glycerol 3-phosphate + NAD(+) = dihydroxyacetone phosphate + NADH + H(+). It catalyses the reaction sn-glycerol 3-phosphate + NADP(+) = dihydroxyacetone phosphate + NADPH + H(+). The protein operates within membrane lipid metabolism; glycerophospholipid metabolism. In terms of biological role, catalyzes the reduction of the glycolytic intermediate dihydroxyacetone phosphate (DHAP) to sn-glycerol 3-phosphate (G3P), the key precursor for phospholipid synthesis. In Francisella tularensis subsp. holarctica (strain FTNF002-00 / FTA), this protein is Glycerol-3-phosphate dehydrogenase [NAD(P)+].